The sequence spans 331 residues: Tetraspanin-10 (331 aa).

The segment at 1–34 (MKEEECSPLLSQDTAGREHPLTRNSPPTANIPCP) is disordered. Residues 1-76 (MKEEECSPLL…LSTGSNCVKY (76 aa)) lie on the Cytoplasmic side of the membrane. Residues 77–97 (LIFLSNFLFSLPSLLALAAGL) traverse the membrane as a helical segment. At 98–120 (WGLTVKRSQGIGWGGPVPTDPML) the chain is on the extracellular side. A helical transmembrane segment spans residues 121 to 141 (MLVLGGLVVSVVSLSGCLGAF). Topologically, residues 142 to 152 (CENSCLLHWYC) are cytoplasmic. Residues 153–173 (GAVLFCLALEALAGVLMVTLW) form a helical membrane-spanning segment. Residues 174–331 (KPLQDSLKYT…AAEDIEAGPL (158 aa)) are Extracellular-facing. 4 disulfides stabilise this stretch: cysteine 210–cysteine 277, cysteine 211–cysteine 241, cysteine 227–cysteine 235, and cysteine 242–cysteine 256. A glycan (N-linked (GlcNAc...) asparagine) is linked at asparagine 226.

It belongs to the tetraspanin (TM4SF) family. Interacts with ADAM10.

It is found in the cell membrane. In terms of biological role, part of TspanC8 subgroup, composed of 6 members that interact with the transmembrane metalloprotease ADAM10. This interaction is required for ADAM10 exit from the endoplasmic reticulum and for enzymatic maturation and trafficking to the cell surface as well as substrate specificity. Different TspanC8/ADAM10 complexes have distinct substrates. This is Tetraspanin-10 (Tspan10) from Mus musculus (Mouse).